A 1033-amino-acid chain; its full sequence is Isoleucine--tRNA ligase 2 (1033 aa).

Positions 47-57 (PTANGLPHVGH) match the 'HIGH' region motif. Residues 590 to 594 (KMSKS) carry the 'KMSKS' region motif. Lys-593 is an ATP binding site.

The protein belongs to the class-I aminoacyl-tRNA synthetase family. IleS type 2 subfamily. As to quaternary structure, monomer. Zn(2+) serves as cofactor.

It localises to the cytoplasm. It catalyses the reaction tRNA(Ile) + L-isoleucine + ATP = L-isoleucyl-tRNA(Ile) + AMP + diphosphate. Its function is as follows. Catalyzes the attachment of isoleucine to tRNA(Ile). As IleRS can inadvertently accommodate and process structurally similar amino acids such as valine, to avoid such errors it has two additional distinct tRNA(Ile)-dependent editing activities. One activity is designated as 'pretransfer' editing and involves the hydrolysis of activated Val-AMP. The other activity is designated 'posttransfer' editing and involves deacylation of mischarged Val-tRNA(Ile). This chain is Isoleucine--tRNA ligase 2, found in Bacillus thuringiensis subsp. konkukian (strain 97-27).